The chain runs to 211 residues: C-type lectin domain family 2 member L (211 aa).

The segment at 1-53 (MEPAREPPARARPPPPAARPAPAAPRPRSPAEAEARGPEGLLRRSGSGYEGST) is disordered. Residues 10–28 (RARPPPPAARPAPAAPRPR) show a composition bias toward pro residues. A Phosphoserine modification is found at S29. A helical membrane pass occupies residues 66–86 (LLLGAIAVLLFAILVVMSILA). The C-type lectin domain maps to 104-206 (YGRKCYYFSE…CLTTRPWVCS (103 aa)). 2 cysteine pairs are disulfide-bonded: C125–C205 and C184–C197.

The protein resides in the membrane. The polypeptide is C-type lectin domain family 2 member L (Clec2l) (Mus musculus (Mouse)).